The sequence spans 288 residues: Probable ketoamine kinase VC_1539 (288 aa).

ATP is bound at residue 92-94 (NYL). D195 acts as the Proton acceptor in catalysis.

Belongs to the fructosamine kinase family.

Functionally, ketoamine kinase that phosphorylates ketoamines on the third carbon of the sugar moiety to generate ketoamine 3-phosphate. The chain is Probable ketoamine kinase VC_1539 from Vibrio cholerae serotype O1 (strain ATCC 39315 / El Tor Inaba N16961).